Here is a 625-residue protein sequence, read N- to C-terminus: Putative surface protein bspA-like (625 aa).

Topologically, residues 1–548 (MMTPGKSSKT…KAIKGGEIAG (548 aa)) are extracellular. Asn-15 carries N-linked (GlcNAc...) asparagine glycosylation. LRR repeat units follow at residues 38–60 (CSSF…AFTG), 61–83 (CSSL…AFSE), 85–106 (SSIT…AFSG), 107–129 (CSKL…AFRG), 153–175 (CSSL…AFYG), 176–198 (CSSL…AFQE), 200–221 (SKLT…AFKR), 222–245 (CSSL…FYEC), 247–267 (KLTS…AFSK), 271–293 (LTSI…VFLN), 325–347 (IPKS…TLTH), 348–368 (FTNL…PESF), and 369–392 (IEGD…AFKD). A glycan (N-linked (GlcNAc...) asparagine) is linked at Asn-227. A disordered region spans residues 439–538 (KQSEENPNQP…TDDPSKSKEN (100 aa)). A compositionally biased stretch (low complexity) spans 443–526 (ENPNQPGENP…QPGENPSQPG (84 aa)). A helical membrane pass occupies residues 549–571 (IIIGSLIGICLVVAICFGVYYYF). Topologically, residues 572 to 625 (MRIKPKNKNDDNEGNQEDTIANGTNEVTNENVLATFDEQPNNESDSNGLDSAEV) are cytoplasmic. Residues 577–625 (KNKNDDNEGNQEDTIANGTNEVTNENVLATFDEQPNNESDSNGLDSAEV) form a disordered region. A compositionally biased stretch (polar residues) spans 588–625 (EDTIANGTNEVTNENVLATFDEQPNNESDSNGLDSAEV).

It is found in the cell membrane. May bind host tissue. The polypeptide is Putative surface protein bspA-like (BSPAL1) (Trichomonas vaginalis).